The primary structure comprises 458 residues: Gamma aminobutyrate transaminase 2 (458 aa).

114–115 contributes to the pyridoxal 5'-phosphate binding site; it reads GS. Tyrosine 147 contacts substrate. Aspartate 254 contributes to the pyridoxal 5'-phosphate binding site. Lysine 283 lines the substrate pocket. At lysine 283 the chain carries N6-(pyridoxal phosphate)lysine.

This sequence belongs to the class-III pyridoxal-phosphate-dependent aminotransferase family. As to expression, expressed in leaves, roots, stems, flowers and fruits. Expressed in carpels, but not in stamens.

The protein localises to the cytoplasm. The enzyme catalyses 4-aminobutanoate + pyruvate = succinate semialdehyde + L-alanine. The catalysed reaction is 4-aminobutanoate + glyoxylate = succinate semialdehyde + glycine. In terms of biological role, transaminase that degrades gamma-amino butyric acid (GABA) and uses pyruvate or glyoxylate as amino-group acceptor. Cannot use beta-alanine, ornithine, acetylornithine, serine, glycine, asparagine, glutamine, glutamate, valine, leucine, isoleucine, methionine, phenylalanine, histidine, lysine, arginine, aspartate, threonine, tyrosine, tryptophan, proline, or cysteine as amino donors. May be responsible for establishing the GABA gradient in the carpel. This is Gamma aminobutyrate transaminase 2 (GABA-TP2) from Solanum lycopersicum (Tomato).